Consider the following 286-residue polypeptide: Phosphate import ATP-binding protein PstB (286 aa).

The interval M1 to D27 is disordered. Residues G15 to D27 are compositionally biased toward basic and acidic residues. In terms of domain architecture, ABC transporter spans M33–V281. G65–S72 is a binding site for ATP.

This sequence belongs to the ABC transporter superfamily. Phosphate importer (TC 3.A.1.7) family. As to quaternary structure, the complex is composed of two ATP-binding proteins (PstB), two transmembrane proteins (PstC and PstA) and a solute-binding protein (PstS).

The protein resides in the cell membrane. It catalyses the reaction phosphate(out) + ATP + H2O = ADP + 2 phosphate(in) + H(+). In terms of biological role, part of the ABC transporter complex PstSACB involved in phosphate import. Responsible for energy coupling to the transport system. This chain is Phosphate import ATP-binding protein PstB, found in Rubrobacter xylanophilus (strain DSM 9941 / JCM 11954 / NBRC 16129 / PRD-1).